We begin with the raw amino-acid sequence, 91 residues long: Cell division protein FtsB (91 aa).

Residues 1–3 (MKF) lie on the Cytoplasmic side of the membrane. A helical membrane pass occupies residues 4-21 (IVGLLLVLLLALQYQLWI). The Periplasmic segment spans residues 22-91 (SKDGLGELRQ…ETFFQVVEEP (70 aa)). A coiled-coil region spans residues 26–74 (LGELRQLSRSIKQQRHENATLIERNQVLKAEVQDLKSGLDALEERARSG).

The protein belongs to the FtsB family. As to quaternary structure, part of a complex composed of FtsB, FtsL and FtsQ.

The protein localises to the cell inner membrane. In terms of biological role, essential cell division protein. May link together the upstream cell division proteins, which are predominantly cytoplasmic, with the downstream cell division proteins, which are predominantly periplasmic. The protein is Cell division protein FtsB of Nitrosococcus oceani (strain ATCC 19707 / BCRC 17464 / JCM 30415 / NCIMB 11848 / C-107).